We begin with the raw amino-acid sequence, 220 residues long: Eukaryotic translation initiation factor 3 subunit B (220 aa).

Positions 1-94 are sufficient for interaction with HCR1 and TIF32; sequence MPEPIAFDES…LIIELDSAAA (94 aa). The interval 1–220 is sufficient for interaction with PIC8; that stretch reads MPEPIAFDES…GVQAWGGERI (220 aa). An RRM domain is found at 37–120; that stretch reads HFVICDGAPI…HRLAVNKLPD (84 aa).

Belongs to the eIF-3 subunit B family. As to quaternary structure, component of the eukaryotic translation initiation factor 3 (eIF-3) complex.

Its subcellular location is the cytoplasm. In terms of biological role, RNA-binding component of the eukaryotic translation initiation factor 3 (eIF-3) complex, which is involved in protein synthesis of a specialized repertoire of mRNAs and, together with other initiation factors, stimulates binding of mRNA and methionyl-tRNAi to the 40S ribosome. The eIF-3 complex specifically targets and initiates translation of a subset of mRNAs involved in cell proliferation. The chain is Eukaryotic translation initiation factor 3 subunit B (TIF32) from Pichia angusta (Yeast).